Consider the following 285-residue polypeptide: 4-diphosphocytidyl-2-C-methyl-D-erythritol kinase (285 aa).

K28 is a catalytic residue. Residue 109-119 participates in ATP binding; the sequence is PVAAGLGGGSA. D148 is a catalytic residue.

It belongs to the GHMP kinase family. IspE subfamily.

The catalysed reaction is 4-CDP-2-C-methyl-D-erythritol + ATP = 4-CDP-2-C-methyl-D-erythritol 2-phosphate + ADP + H(+). It participates in isoprenoid biosynthesis; isopentenyl diphosphate biosynthesis via DXP pathway; isopentenyl diphosphate from 1-deoxy-D-xylulose 5-phosphate: step 3/6. Functionally, catalyzes the phosphorylation of the position 2 hydroxy group of 4-diphosphocytidyl-2C-methyl-D-erythritol. This Novosphingobium aromaticivorans (strain ATCC 700278 / DSM 12444 / CCUG 56034 / CIP 105152 / NBRC 16084 / F199) protein is 4-diphosphocytidyl-2-C-methyl-D-erythritol kinase.